The primary structure comprises 467 residues: Serine/threonine-protein kinase US3 homolog (467 aa).

A disordered region spans residues 64–155 (GPEVAPPART…PAGGVTREEA (92 aa)). Residues 99 to 111 (NERRAATGDEKES) show a composition bias toward basic and acidic residues. Over residues 117–144 (NESESESESESESESGADDGDWDDDDDA) the composition is skewed to acidic residues. The region spanning 164–462 (FRIIRRLTPG…AAELLEHPVF (299 aa)) is the Protein kinase domain. Residues 170–178 (LTPGSEGRV) and Lys194 each bind ATP. The active-site Proton acceptor is Asp279.

This sequence belongs to the protein kinase superfamily. Ser/Thr protein kinase family. Phosphorylated by UL13 homolog; this phosphorylation regulates subsequent phosphorylation of UL31 and UL34 homologs by US3. Autophosphorylated.

The protein resides in the host cytoplasm. It localises to the host nucleus. It carries out the reaction L-seryl-[protein] + ATP = O-phospho-L-seryl-[protein] + ADP + H(+). The catalysed reaction is L-threonyl-[protein] + ATP = O-phospho-L-threonyl-[protein] + ADP + H(+). Functionally, multifunctional serine/threonine kinase that plays a role in several processes including egress of virus particles from the nucleus, modulation of the actin cytoskeleton and inhibition of apoptosis. Phosphorylates UL31 and UL34 homologs, two critical regulators of capsid budding from nucleus to endoplasmic reticulum, thereby facilitating virion egress. Modulates and redistributes host components of the nuclear envelope, including LMNA, emerin/EMD and the nuclear matrix protein MATR3. Phosphorylates envelope glycoprotein B (gB), probably to direct it to the cell surface. Promotes virus intracellular spread by restructuring host cell cytoskeleton. Blocks host apoptosis to extend cell survival and allow efficient viral replication. Promotes viral gene expression by phosphorylating host HDAC2 to reduce viral genome silencing. This Bos taurus (Bovine) protein is Serine/threonine-protein kinase US3 homolog.